The sequence spans 472 residues: MELQDPKMNGALPSDAVGYRQEREGFLPSRGPAPGSKPVQFMDFEGKTSFGMSVFNLSNAIMGSGILGLAYAMAHTGVIFFLALLLCIALLSSYSIHLLLTCAGIAGIRAYEQLGQRAFGPAGKVVVATVICLHNVGAMSSYLFIIKSELPLVIGTFLYMDPEGDWFLKGNLLIIIVSVLIILPLALMKHLGYLGYTSGLSLTCMLFFLVSVIYKKFQLGCAIGHNETAMESEALVGLPSQGLNSSCEAQMFTVDSQMSYTVPIMAFAFVCHPEVLPIYTELCRPSKRRMQAVANVSIGAMFCMYGLTATFGYLTFYSSVKAEMLHMYSQKDPLILCVRLAVLLAVTLTVPVVLFPIRRALQQLLFPGKAFSWPRHVAIALILLVLVNVLVICVPTIRDIFGVIGSTSAPSLIFILPSIFYLRIVPSEVEPFLSWPKIQALCFGVLGVLFMAVSLGFMFANWATGQSRMSGH.

M1 is subject to N-acetylmethionine. Residues 1–48 (MELQDPKMNGALPSDAVGYRQEREGFLPSRGPAPGSKPVQFMDFEGKT) lie on the Cytoplasmic side of the membrane. A helical membrane pass occupies residues 49–71 (SFGMSVFNLSNAIMGSGILGLAY). The Extracellular portion of the chain corresponds to 72–87 (AMAHTGVIFFLALLLC). A helical transmembrane segment spans residues 88 to 108 (IALLSSYSIHLLLTCAGIAGI). Residues 109-125 (RAYEQLGQRAFGPAGKV) are Cytoplasmic-facing. The chain crosses the membrane as a helical span at residues 126-146 (VVATVICLHNVGAMSSYLFII). Over 147–166 (KSELPLVIGTFLYMDPEGDW) the chain is Extracellular. The chain crosses the membrane as a helical span at residues 167-187 (FLKGNLLIIIVSVLIILPLAL). The Cytoplasmic segment spans residues 188–192 (MKHLG). The helical transmembrane segment at 193-213 (YLGYTSGLSLTCMLFFLVSVI) threads the bilayer. The Extracellular segment spans residues 214-257 (YKKFQLGCAIGHNETAMESEALVGLPSQGLNSSCEAQMFTVDSQ). C221 and C247 form a disulfide bridge. An N-linked (GlcNAc...) asparagine glycan is attached at N226. The chain crosses the membrane as a helical span at residues 258 to 278 (MSYTVPIMAFAFVCHPEVLPI). Residues 279–295 (YTELCRPSKRRMQAVAN) lie on the Cytoplasmic side of the membrane. Residues 296–316 (VSIGAMFCMYGLTATFGYLTF) traverse the membrane as a helical segment. Over 317-334 (YSSVKAEMLHMYSQKDPL) the chain is Extracellular. The helical transmembrane segment at 335–355 (ILCVRLAVLLAVTLTVPVVLF) threads the bilayer. Residues 356–376 (PIRRALQQLLFPGKAFSWPRH) lie on the Cytoplasmic side of the membrane. The helical transmembrane segment at 377 to 397 (VAIALILLVLVNVLVICVPTI) threads the bilayer. At 398–399 (RD) the chain is on the extracellular side. Residues 400–420 (IFGVIGSTSAPSLIFILPSIF) traverse the membrane as a helical segment. Topologically, residues 421-439 (YLRIVPSEVEPFLSWPKIQ) are cytoplasmic. Residues 440-460 (ALCFGVLGVLFMAVSLGFMFA) traverse the membrane as a helical segment. The Extracellular segment spans residues 461-472 (NWATGQSRMSGH).

It belongs to the amino acid/polyamine transporter 2 family. As to expression, predominantly expressed in stomach, brain, liver, lung and intestinal tract.

It localises to the cell membrane. The enzyme catalyses L-serine(out) + Na(+)(out) + H(+)(in) = L-serine(in) + Na(+)(in) + H(+)(out). It carries out the reaction L-alanine(out) + Na(+)(out) + H(+)(in) = L-alanine(in) + Na(+)(in) + H(+)(out). The catalysed reaction is glycine(out) + Na(+)(out) + H(+)(in) = glycine(in) + Na(+)(in) + H(+)(out). It catalyses the reaction L-glutamine(out) + Na(+)(out) + H(+)(in) = L-glutamine(in) + Na(+)(in) + H(+)(out). The enzyme catalyses L-asparagine(out) + Na(+)(out) + H(+)(in) = L-asparagine(in) + Na(+)(in) + H(+)(out). It carries out the reaction L-histidine(out) + Na(+)(out) + H(+)(in) = L-histidine(in) + Na(+)(in) + H(+)(out). The catalysed reaction is L-cysteine(out) + Na(+)(out) + H(+)(in) = L-cysteine(in) + Na(+)(in) + H(+)(out). With respect to regulation, not inhibited by lithium. Partial allosteric regulation on ions sodium binding. Its function is as follows. Symporter that cotransports neutral amino acids and sodium ions, coupled to an H(+) antiporter activity. Releases L-glutamine and glycine from astroglial cells and may participate in the glutamate/GABA-L-glutamine cycle and the NMDA receptors activation. In addition, contributes significantly to L-glutamine uptake in retina, namely in ganglion and Mueller cells therefore, participates in the retinal glutamate-glutamine cycle. The transport activity is pH sensitive and Li(+) tolerant. Moreover functions in both direction and is associated with large uncoupled fluxes of protons. The transport is electroneutral coupled to the cotransport of 1 Na(+) and the antiport of 1 H(+). May have a particular importance for modulation of net hepatic glutamine flux. This Homo sapiens (Human) protein is Sodium-coupled neutral amino acid transporter 5 (SLC38A5).